We begin with the raw amino-acid sequence, 179 residues long: Hypoxanthine-guanine phosphoribosyltransferase (179 aa).

Lys42 and Gly43 together coordinate diphosphate. Mg(2+) is bound by residues Glu98 and Asp99. Glu102 (proton acceptor) is an active-site residue. Residues Lys130, 151–152 (FV), and Asp158 each bind GMP. Position 164 (Arg164) interacts with diphosphate.

Belongs to the purine/pyrimidine phosphoribosyltransferase family. It depends on Mg(2+) as a cofactor.

The protein localises to the cytoplasm. The enzyme catalyses IMP + diphosphate = hypoxanthine + 5-phospho-alpha-D-ribose 1-diphosphate. The catalysed reaction is GMP + diphosphate = guanine + 5-phospho-alpha-D-ribose 1-diphosphate. The protein operates within purine metabolism; IMP biosynthesis via salvage pathway; IMP from hypoxanthine: step 1/1. Its pathway is purine metabolism; GMP biosynthesis via salvage pathway; GMP from guanine: step 1/1. Its function is as follows. Purine salvage pathway enzyme that catalyzes the transfer of the ribosyl-5-phosphate group from 5-phospho-alpha-D-ribose 1-diphosphate (PRPP) to the N9 position of the 6-oxopurines hypoxanthine and guanine to form the corresponding ribonucleotides IMP (inosine 5'-monophosphate) and GMP (guanosine 5'-monophosphate), with the release of PPi. This Staphylococcus epidermidis (strain ATCC 35984 / DSM 28319 / BCRC 17069 / CCUG 31568 / BM 3577 / RP62A) protein is Hypoxanthine-guanine phosphoribosyltransferase (hpt).